A 108-amino-acid chain; its full sequence is uncharacterized protein (108 aa).

A run of 3 helical transmembrane segments spans residues 36 to 56, 58 to 78, and 88 to 108; these read LAIM…DKMI, FIFV…KLLF, and IVFL…FFNL.

It localises to the cell membrane. This is an uncharacterized protein from Alkalihalophilus pseudofirmus (strain ATCC BAA-2126 / JCM 17055 / OF4) (Bacillus pseudofirmus).